An 82-amino-acid polypeptide reads, in one-letter code: Cytochrome b559 subunit alpha (82 aa).

The helical transmembrane segment at 22-36 (IIHAVTLPAIFIAGF) threads the bilayer. Residue histidine 24 coordinates heme.

The protein belongs to the PsbE/PsbF family. In terms of assembly, heterodimer of an alpha subunit and a beta subunit. PSII is composed of 1 copy each of membrane proteins PsbA, PsbB, PsbC, PsbD, PsbE, PsbF, PsbH, PsbI, PsbJ, PsbK, PsbL, PsbM, PsbT, PsbX, PsbY, Psb30/Ycf12, peripheral proteins PsbO, CyanoQ (PsbQ), PsbU, PsbV and a large number of cofactors. It forms dimeric complexes. The cofactor is heme b.

The protein resides in the cellular thylakoid membrane. Its function is as follows. This b-type cytochrome is tightly associated with the reaction center of photosystem II (PSII). PSII is a light-driven water:plastoquinone oxidoreductase that uses light energy to abstract electrons from H(2)O, generating O(2) and a proton gradient subsequently used for ATP formation. It consists of a core antenna complex that captures photons, and an electron transfer chain that converts photonic excitation into a charge separation. This chain is Cytochrome b559 subunit alpha, found in Prochlorococcus marinus (strain MIT 9211).